Reading from the N-terminus, the 671-residue chain is cGMP-dependent protein kinase 1 (671 aa).

Residue S2 is modified to N-acetylserine. Residues 2 to 59 are a coiled coil; it reads SELEEDFAKILMLKEERIKELEKRLSEKEEEIQELKRKLHKCQSVLPVPSTHIGPRTT. The tract at residues 2–102 is required for dimerization; it reads SELEEDFAKI…LIKEAILDND (101 aa). The interval 9-44 is leucine-zipper; sequence AKILMLKEERIKELEKRLSEKEEEIQELKRKLHKCQ. Residues 50–75 are autoinhibitory domain; sequence PSTHIGPRTTRAQGISAEPQTYRSFH. T59 bears the Phosphothreonine; by autocatalysis mark. Positions 103 to 220 are cGMP-binding, high affinity; the sequence is FMKNLELSQI…EYMEFLKSVP (118 aa). Residues 167–170, 177–178, R282, 291–294, 301–302, and Y336 each bind 3',5'-cyclic GMP; these read GELA, RT, and GEKA. The segment at 221–341 is cGMP-binding, low affinity; that stretch reads TFQSLPDEIL…SNKAYEDAEA (121 aa). Residues 360-619 enclose the Protein kinase domain; it reads FNIIDTLGVG…VKDIQKHKWF (260 aa). ATP contacts are provided by residues 366-374 and K390; that span reads LGVGGFGRV. D484 (proton acceptor) is an active-site residue. T515 is modified (phosphothreonine). In terms of domain architecture, AGC-kinase C-terminal spans 620-671; it reads EGFNWEGLRKGTLTPPIIPSVASPTDTSNFDSFPEDSDEPPPDDNSGWDIDF. The disordered stretch occupies residues 635-671; it reads PIIPSVASPTDTSNFDSFPEDSDEPPPDDNSGWDIDF. The segment covering 652–661 has biased composition (acidic residues); it reads FPEDSDEPPP.

This sequence belongs to the protein kinase superfamily. AGC Ser/Thr protein kinase family. cGMP subfamily. As to quaternary structure, isoform alpha: parallel homodimer or heterodimer and also heterotetramer. Interacts directly with PPP1R12A. Non-covalent dimer of dimer of PRKG1-PRKG1 and PPP1R12A-PPP1R12A. This interaction targets PRKG1 to stress fibers to mediate smooth muscle cell relaxation and vasodilation in responses to rises in cGMP. Isoform beta: antiparallel homodimer. Part of cGMP kinase signaling complex at least composed of ACTA2/alpha-actin, CNN1/calponin H1, PLN/phospholamban, PRKG1 and ITPR1. Interacts with IRAG1. Forms a stable complex with ITPR1, IRAG1, and isoform beta of PRKG1. Interacts with TRPC7 (via ankyrin repeat domain). Isoform alpha interacts with RGS2. Interacts with GTF2I. Autophosphorylation increases kinase activity. In terms of processing, 65 kDa monomer is produced by proteolytic cleavage. Detected in cerebellum, hippocampus, dorsomedial hypothalamus, medulla, subcommissural organ, cerebral cortex, amygdala, habenulae, various hypothalamic regions, olfactory bulb, pituitary gland, and retina. Isoform alpha is prominent in the cerebellum and medulla, whereas isoform Beta is predominant in the cortex, hippocampus, hypothalamus, and olfactory bulb.

It localises to the cytoplasm. It catalyses the reaction L-seryl-[protein] + ATP = O-phospho-L-seryl-[protein] + ADP + H(+). It carries out the reaction L-threonyl-[protein] + ATP = O-phospho-L-threonyl-[protein] + ADP + H(+). Its activity is regulated as follows. In the absence of cGMP, PRKG1 activity is suppressed by autoinhibitory contacts. In terms of biological role, serine/threonine protein kinase that acts as a key mediator of the nitric oxide (NO)/cGMP signaling pathway. GMP binding activates PRKG1, which phosphorylates serines and threonines on many cellular proteins. Numerous protein targets for PRKG1 phosphorylation are implicated in modulating cellular calcium, but the contribution of each of these targets may vary substantially among cell types. Proteins that are phosphorylated by PRKG1 regulate platelet activation and adhesion, smooth muscle contraction, cardiac function, gene expression, feedback of the NO-signaling pathway, and other processes involved in several aspects of the CNS like axon guidance, hippocampal and cerebellar learning, circadian rhythm and nociception. Smooth muscle relaxation is mediated through lowering of intracellular free calcium, by desensitization of contractile proteins to calcium, and by decrease in the contractile state of smooth muscle or in platelet activation. Regulates intracellular calcium levels via several pathways: phosphorylates IRAG1 and inhibits IP3-induced Ca(2+) release from intracellular stores, phosphorylation of KCNMA1 (BKCa) channels decreases intracellular Ca(2+) levels, which leads to increased opening of this channel. PRKG1 phosphorylates the canonical transient receptor potential channel (TRPC) family which inactivates the associated inward calcium current. Another mode of action of NO/cGMP/PKGI signaling involves PKGI-mediated inactivation of the Ras homolog gene family member A (RhoA). Phosphorylation of RHOA by PRKG1 blocks the action of this protein in myriad processes: regulation of RHOA translocation; decreasing contraction; controlling vesicle trafficking, reduction of myosin light chain phosphorylation resulting in vasorelaxation. Activation of PRKG1 by NO signaling also alters gene expression in a number of tissues. In smooth muscle cells, increased cGMP and PRKG1 activity influence expression of smooth muscle-specific contractile proteins, levels of proteins in the NO/cGMP signaling pathway, down-regulation of the matrix proteins osteopontin and thrombospondin-1 to limit smooth muscle cell migration and phenotype. Regulates vasodilator-stimulated phosphoprotein (VASP) functions in platelets and smooth muscle. The protein is cGMP-dependent protein kinase 1 (Prkg1) of Mus musculus (Mouse).